Here is a 796-residue protein sequence, read N- to C-terminus: Peroxisome proliferator-activated receptor gamma coactivator 1-alpha (796 aa).

Lys-77 carries the post-translational modification N6-acetyllysine. The tract at residues Pro-98–Glu-138 is disordered. The span at Asp-114–Pro-127 shows a compositional bias: polar residues. The LXXLL motif signature appears at Leu-142–Leu-146. Lys-144 is modified (N6-acetyllysine). Residue Thr-176 is modified to Phosphothreonine; by AMPK. Lys-182 bears the N6-acetyllysine mark. The segment at Tyr-211 to Asn-275 is disordered. A compositionally biased stretch (basic and acidic residues) spans Asp-217–Ala-235. Over residues Thr-242–Leu-258 the composition is skewed to polar residues. N6-acetyllysine occurs at positions 252, 269, 276, 319, 345, 411, 440, and 449. The disordered stretch occupies residues Gly-288–Ser-350. Residues Gly-291–Thr-337 are interaction with PPARG. The segment at Glu-348–Arg-796 is mediates interaction with RNF34. Ser-537 bears the Phosphoserine; by AMPK mark. Disordered regions lie at residues Phe-541–Ser-597 and His-611–Lys-669. The span at Gln-561–Cys-576 shows a compositional bias: basic residues. The span at Ser-577–Ser-597 shows a compositional bias: low complexity. Over residues Ser-620 to Arg-629 the composition is skewed to basic residues. A compositionally biased stretch (basic and acidic residues) spans Pro-630–Lys-669. One can recognise an RRM domain in the interval Arg-675–Arg-751. N6-acetyllysine is present on residues Lys-756 and Lys-777.

In terms of assembly, homooligomer. Interacts with MYBBP1A; inhibits MYBBP1A transcriptional activation. Interacts with PRDM16, LPIN1 and PML. Interacts (via LXXLL motif) with RORA and RORC (via AF-2 motif); activates RORA and RORC transcriptional activation. Interacts with LRPPRC. Interacts with FOXO1. Interacts with NR5A2. In terms of processing, phosphorylation by AMPK in skeletal muscle increases activation of its own promoter. Phosphorylated by CLK2. Heavily acetylated by KAT2A/GCN5 under conditions of high nutrients, leading to inactivation of PPARGC1A. Deacetylated by SIRT1 in low nutrients/high NAD conditions, leading to its activation. Post-translationally, ubiquitinated. Ubiquitination by RNF34 induces proteasomal degradation.

It is found in the nucleus. The protein localises to the PML body. In terms of biological role, transcriptional coactivator for steroid receptors and nuclear receptors. Greatly increases the transcriptional activity of PPARG and thyroid hormone receptor on the uncoupling protein promoter. Can regulate key mitochondrial genes that contribute to the program of adaptive thermogenesis. Plays an essential role in metabolic reprogramming in response to dietary availability through coordination of the expression of a wide array of genes involved in glucose and fatty acid metabolism. Acts as a key regulator of gluconeogenesis: stimulates hepatic gluconeogenesis by increasing the expression of gluconeogenic enzymes, and acting together with FOXO1 to promote the fasting gluconeogenic program. Induces the expression of PERM1 in the skeletal muscle in an ESRRA-dependent manner. Also involved in the integration of the circadian rhythms and energy metabolism. Required for oscillatory expression of clock genes, such as BMAL1 and NR1D1, through the coactivation of RORA and RORC, and metabolic genes, such as PDK4 and PEPCK. The sequence is that of Peroxisome proliferator-activated receptor gamma coactivator 1-alpha (Ppargc1a) from Rattus norvegicus (Rat).